A 335-amino-acid polypeptide reads, in one-letter code: NADH-quinone oxidoreductase subunit H (335 aa).

Helical transmembrane passes span 11 to 31, 81 to 101, 114 to 134, 154 to 174, 187 to 207, 238 to 258, 270 to 290, and 307 to 327; these read VILT…AGAL, VIFT…FAII, IGLL…LFAG, VSYE…VGSF, LWFI…GVAV, FFVG…TLFF, QLSF…FILL, and WKFC…IVLW.

Belongs to the complex I subunit 1 family. NDH-1 is composed of 13 different subunits. Subunits NuoA, H, J, K, L, M, N constitute the membrane sector of the complex.

The protein localises to the cell inner membrane. The enzyme catalyses a quinone + NADH + 5 H(+)(in) = a quinol + NAD(+) + 4 H(+)(out). Functionally, NDH-1 shuttles electrons from NADH, via FMN and iron-sulfur (Fe-S) centers, to quinones in the respiratory chain. The immediate electron acceptor for the enzyme in this species is believed to be ubiquinone. Couples the redox reaction to proton translocation (for every two electrons transferred, four hydrogen ions are translocated across the cytoplasmic membrane), and thus conserves the redox energy in a proton gradient. This subunit may bind ubiquinone. This is NADH-quinone oxidoreductase subunit H from Pseudomonas fluorescens (strain Pf0-1).